Consider the following 1277-residue polypeptide: NPC intracellular cholesterol transporter 1 (1277 aa).

The N-terminal stretch at 1-22 is a signal peptide; it reads MGAHHPALGLLLLLLCPAQVFS. The Lumenal portion of the chain corresponds to 23–269; it reads QSCVWYGECG…WRIWGLDAMY (247 aa). 9 disulfide bridges follow: cysteine 25/cysteine 74, cysteine 31/cysteine 42, cysteine 63/cysteine 109, cysteine 75/cysteine 113, cysteine 97/cysteine 238, cysteine 100/cysteine 160, cysteine 177/cysteine 184, cysteine 227/cysteine 243, and cysteine 240/cysteine 247. Asparagine 41 contributes to the cholesterol binding site. An N-linked (GlcNAc...) asparagine glycan is attached at asparagine 70. Glutamine 79 lines the cholesterol pocket. 2 N-linked (GlcNAc...) asparagine glycosylation sites follow: asparagine 122 and asparagine 137. Positions 175–205 are important for cholesterol binding and cholesterol transfer from NPC1 to liposomes; the sequence is LLCGRDARACNATNWIEYMFNKDNGQAPFTI. 3 N-linked (GlcNAc...) asparagine glycosylation sites follow: asparagine 185, asparagine 222, and asparagine 228. Residues 270-290 traverse the membrane as a helical segment; it reads VIMWVTYVAFLFVFFGALLAV. Residues 291 to 350 are Cytoplasmic-facing; the sequence is WCHRRRYFVSEYTPIDSNIAFSVNSSDKGEASCCDPLGAAFDDCLRRMFTKWGAFCVRNP. A helical membrane pass occupies residues 351-371; the sequence is TCIIFFSLAFITVCSSGLVFV. Topologically, residues 372 to 621 are lumenal; sequence QVTTNPVELW…ELNRESNSDV (250 aa). Asparagine 414, asparagine 459, asparagine 478, and asparagine 524 each carry an N-linked (GlcNAc...) asparagine glycan. 2 cysteine pairs are disulfide-bonded: cysteine 468–cysteine 479 and cysteine 516–cysteine 533. The SSD domain occupies 620 to 785; it reads DVFTVIISYV…ITCFVSLLGL (166 aa). The chain crosses the membrane as a helical span at residues 622 to 642; the sequence is FTVIISYVVMFLYISLALGHI. The Cytoplasmic portion of the chain corresponds to 643–653; it reads QSCSRLLVDSK. Residues 654 to 674 traverse the membrane as a helical segment; the sequence is ISLGIAGILIVLSSVACSLGI. Residues 675–683 lie on the Lumenal side of the membrane; it reads FSYMGMPLT. Residues 684–704 form a helical membrane-spanning segment; it reads LIVIEVIPFLVLAVGVDNIFI. Topologically, residues 705 to 730 are cytoplasmic; that stretch reads LVQTYQRDERLQEETLDQQLGRILGE. A helical membrane pass occupies residues 731-751; sequence VAPTMFLSSFSETSAFFFGAL. Residues 752 to 759 are Lumenal-facing; sequence SSMPAVHT. The helical transmembrane segment at 760–780 threads the bilayer; the sequence is FSLFAGMAVLIDFLLQITCFV. At 781 to 832 the chain is on the cytoplasmic side; the sequence is SLLGLDIKRQEKNHLDILCCVRGADDGQGSHASESYLFRFFKNYFAPLLLKD. The helical transmembrane segment at 833 to 853 threads the bilayer; the sequence is WLRPIVVAVFVGVLSFSVAVV. The Lumenal segment spans residues 854–1097; sequence NKVDIGLDQS…EQYLTIIDDT (244 aa). N-linked (GlcNAc...) asparagine glycans are attached at residues asparagine 868 and asparagine 898. Cysteine 909 and cysteine 914 are disulfide-bonded. Residues asparagine 916, asparagine 961, asparagine 968, and asparagine 1063 are each glycosylated (N-linked (GlcNAc...) asparagine). 3 disulfides stabilise this stretch: cysteine 956-cysteine 1011, cysteine 957-cysteine 979, and cysteine 967-cysteine 976. A helical membrane pass occupies residues 1098–1118; sequence IFNLSVSLGSIFLVTLVVLGC. Residues 1119-1123 are Cytoplasmic-facing; it reads ELWSA. A helical transmembrane segment spans residues 1124 to 1144; the sequence is VIMCITIAMILVNMFGVMWLW. Residue glycine 1145 is a topological domain, lumenal. A helical transmembrane segment spans residues 1146–1166; it reads ISLNAVSLVNLVMSCGISVEF. At 1167–1194 the chain is on the cytoplasmic side; the sequence is CSHITRAFTMSTKGSRVSRAEEALAHMG. A helical membrane pass occupies residues 1195–1215; the sequence is SSVFSGITLTKFGGIVVLAFA. At 1216 to 1226 the chain is on the lumenal side; it reads KSQIFEIFYFR. The helical transmembrane segment at 1227-1247 threads the bilayer; sequence MYLAMVLLGATHGLIFLPVLL. Residues 1248–1277 lie on the Cytoplasmic side of the membrane; it reads SYIGPSVNKAKRHTTYERYRGTERERLLNF. The required for location in lysosomes stretch occupies residues 1274-1277; that stretch reads LLNF. A Di-leucine motif motif is present at residues 1274–1277; sequence LLNF.

Belongs to the patched family. As to quaternary structure, interacts (via the second lumenal domain) with NPC2. Interacts with TMEM97; the interaction may decrease NPC1 availability to the cell. Interacts with TIM1. Interacts with SLC38A9; this interaction inhibits cholesterol-mediated mTORC1 activation via its sterol transport activity. Post-translationally, N-glycosylated. Detected in liver (at protein level). Ubiquitous. Detected in adult heart, spleen, lung, liver, skeletal muscle, kidney, testis.

The protein localises to the late endosome membrane. It is found in the lysosome membrane. The enzyme catalyses cholesterol(in) = cholesterol(out). Functionally, intracellular cholesterol transporter which acts in concert with NPC2 and plays an important role in the egress of cholesterol from the endosomal/lysosomal compartment. Unesterified cholesterol that has been released from LDLs in the lumen of the late endosomes/lysosomes is transferred by NPC2 to the cholesterol-binding pocket in the N-terminal domain of NPC1. Cholesterol binds to NPC1 with the hydroxyl group buried in the binding pocket. May play a role in vesicular trafficking in glia, a process that may be crucial for maintaining the structural and functional integrity of nerve terminals. Inhibits cholesterol-mediated mTORC1 activation throught its interaction with SLC38A9. The protein is NPC intracellular cholesterol transporter 1 of Mus musculus (Mouse).